A 110-amino-acid chain; its full sequence is Phosphoribosyl-ATP pyrophosphatase (110 aa).

It belongs to the PRA-PH family.

The protein resides in the cytoplasm. It carries out the reaction 1-(5-phospho-beta-D-ribosyl)-ATP + H2O = 1-(5-phospho-beta-D-ribosyl)-5'-AMP + diphosphate + H(+). It participates in amino-acid biosynthesis; L-histidine biosynthesis; L-histidine from 5-phospho-alpha-D-ribose 1-diphosphate: step 2/9. The chain is Phosphoribosyl-ATP pyrophosphatase from Clostridium botulinum (strain ATCC 19397 / Type A).